The primary structure comprises 306 residues: NAD kinase 1 (306 aa).

Catalysis depends on Asp67, which acts as the Proton acceptor. NAD(+) is bound by residues Asp67–Gly68, Asn149–Asp150, and Asp181.

It belongs to the NAD kinase family. It depends on a divalent metal cation as a cofactor.

The protein resides in the cytoplasm. It carries out the reaction NAD(+) + ATP = ADP + NADP(+) + H(+). Involved in the regulation of the intracellular balance of NAD and NADP, and is a key enzyme in the biosynthesis of NADP. Catalyzes specifically the phosphorylation on 2'-hydroxyl of the adenosine moiety of NAD to yield NADP. The protein is NAD kinase 1 of Synechococcus sp. (strain ATCC 27144 / PCC 6301 / SAUG 1402/1) (Anacystis nidulans).